The chain runs to 292 residues: E3 ubiquitin-protein ligase trim-21 (292 aa).

The RING-type zinc finger occupies 6–52 (CEICDDDFSSEEDGDHNPRNLKCSHTLCEGCIKKLLKNGRVVCPFCR). The B box-type zinc-finger motif lies at 90 to 137 (NFPPKCVEHPYNVAEFACIESNCSSKNKLMCQTCEEFGAHKGHAKELL). Zn(2+)-binding residues include C95, H98, C123, and H129. Residues 152 to 179 (INQLKLNIQNCTVKKNELEEAVVKSEQL) adopt a coiled-coil conformation.

Belongs to the TRIM/RBCC family. In terms of assembly, interacts with E2 ubiquitin-conjugating enzyme ubc-21. Interacts with ced-6; this mediates interaction of trim-21 with ced-1 and is required for ced-1 ubiquitination. Interacts with nck-1; the interaction is required for ced-1 ubiquitination. In terms of tissue distribution, in early larva, observed mainly in pharyngeal and body wall muscle cells.

It is found in the cytoplasm. The catalysed reaction is S-ubiquitinyl-[E2 ubiquitin-conjugating enzyme]-L-cysteine + [acceptor protein]-L-lysine = [E2 ubiquitin-conjugating enzyme]-L-cysteine + N(6)-ubiquitinyl-[acceptor protein]-L-lysine.. Its pathway is protein modification; protein ubiquitination. Its function is as follows. E3 ubiquitin-protein ligase which catalyzes 'Lys-48'-linked polyubiquitination of ced-1, promoting its proteasomal degradation to maintain appropriate ced-1 levels for apoptotic cell clearance. Acts together with E2 ubiquitin-conjugating enzyme ubc-21. In Caenorhabditis elegans, this protein is E3 ubiquitin-protein ligase trim-21.